We begin with the raw amino-acid sequence, 766 residues long: Phospholipid phosphatase-related protein type 4 (766 aa).

Ser37 is modified (phosphoserine). Transmembrane regions (helical) follow at residues 68–88 (LPCF…SLYF), 120–140 (AIPF…TIMV), 179–199 (FVGV…IIQL), and 248–268 (SFPS…SMYF). N-linked (GlcNAc...) asparagine glycosylation is present at Asn269. The next 2 membrane-spanning stretches (helical) occupy residues 277–297 (KLLK…CGLT) and 309–329 (VYCG…YAVG). Ser347 is modified (phosphoserine). Residue Asn363 is glycosylated (N-linked (GlcNAc...) asparagine). Ser386 is modified (phosphoserine). Residue Asn433 is glycosylated (N-linked (GlcNAc...) asparagine). Position 439 is a phosphoserine (Ser439). Disordered stretches follow at residues 454–503 (SKNE…GNQY) and 510–529 (TVPG…IQSR). Asn456 carries an N-linked (GlcNAc...) asparagine glycan. 2 positions are modified to phosphoserine: Ser462 and Ser474. N-linked (GlcNAc...) asparagine glycosylation is found at Asn515 and Asn545. Ser608 carries the phosphoserine modification. 3 disordered regions span residues 634 to 654 (PIIQ…KWKA), 672 to 705 (DSES…GITT), and 741 to 766 (PERS…PYKD). Residues 688 to 702 (RKRKHIDSNEHHHHG) are compositionally biased toward basic residues. The span at 743-752 (RSNSPENTRN) shows a compositional bias: polar residues.

This sequence belongs to the PA-phosphatase related phosphoesterase family. In terms of processing, O-glycosylated. Probably at Ser-347. Specifically expressed in neurons (at protein level).

The protein localises to the postsynaptic density membrane. Functionally, postsynaptic density membrane protein that indirectly regulates glutamatergic synaptic transmission through lysophosphatidic acid (LPA)-mediated signaling pathways. Binds lysophosphatidic acid (LPA) and mediates its internalization into cells. Could act as receptor or a transporter of this lipid at the post-synaptic membrane. Modulates lysophosphatidic acid (LPA) activity in neuron axonal outgrowth during development by attenuating phospholipid-induced axon collapse. The protein is Phospholipid phosphatase-related protein type 4 of Rattus norvegicus (Rat).